The following is a 161-amino-acid chain: Peptidyl-prolyl cis-trans isomerase-like 3 (161 aa).

N-acetylserine is present on serine 2. Residues 2-154 form the PPIase cyclophilin-type domain; it reads SVTLHTDVGD…NDVHIKDITI (153 aa). Arginine 61 bears the Omega-N-methylarginine mark.

This sequence belongs to the cyclophilin-type PPIase family. PPIL3 subfamily. In terms of assembly, identified in the spliceosome C complex. In terms of tissue distribution, ubiquitous. Detected at low levels.

It catalyses the reaction [protein]-peptidylproline (omega=180) = [protein]-peptidylproline (omega=0). Functionally, PPIases accelerate the folding of proteins. It catalyzes the cis-trans isomerization of proline imidic peptide bonds in oligopeptides. May be involved in pre-mRNA splicing. The protein is Peptidyl-prolyl cis-trans isomerase-like 3 (PPIL3) of Homo sapiens (Human).